The primary structure comprises 419 residues: Adenylosuccinate synthetase (419 aa).

Residues 11 to 17 (GDEGKGK) and 39 to 41 (GHS) each bind GTP. D12 serves as the catalytic Proton acceptor. Residues D12 and G39 each contribute to the Mg(2+) site. Residues 12–15 (DEGK), 37–40 (NAGH), T129, R143, N221, T236, and R296 contribute to the IMP site. H40 functions as the Proton donor in the catalytic mechanism. 292-298 (VSTGRKR) contributes to the substrate binding site. GTP contacts are provided by residues R298, 324–326 (KLD), and 408–410 (GTG).

The protein belongs to the adenylosuccinate synthetase family. Homodimer. The cofactor is Mg(2+).

The protein resides in the cytoplasm. The catalysed reaction is IMP + L-aspartate + GTP = N(6)-(1,2-dicarboxyethyl)-AMP + GDP + phosphate + 2 H(+). Its pathway is purine metabolism; AMP biosynthesis via de novo pathway; AMP from IMP: step 1/2. In terms of biological role, plays an important role in the de novo pathway and in the salvage pathway of purine nucleotide biosynthesis. Catalyzes the first committed step in the biosynthesis of AMP from IMP. In Chaetomium globosum (strain ATCC 6205 / CBS 148.51 / DSM 1962 / NBRC 6347 / NRRL 1970) (Soil fungus), this protein is Adenylosuccinate synthetase.